The primary structure comprises 1061 residues: Isoleucine--tRNA ligase (1061 aa).

A 'HIGH' region motif is present at residues 50 to 60 (PYTSGSAHMGT). The 'KMSKS' region signature appears at 604–608 (KMSKS). Lys607 serves as a coordination point for ATP.

This sequence belongs to the class-I aminoacyl-tRNA synthetase family. IleS type 2 subfamily. Monomer. Zn(2+) is required as a cofactor.

The protein localises to the cytoplasm. It carries out the reaction tRNA(Ile) + L-isoleucine + ATP = L-isoleucyl-tRNA(Ile) + AMP + diphosphate. Catalyzes the attachment of isoleucine to tRNA(Ile). As IleRS can inadvertently accommodate and process structurally similar amino acids such as valine, to avoid such errors it has two additional distinct tRNA(Ile)-dependent editing activities. One activity is designated as 'pretransfer' editing and involves the hydrolysis of activated Val-AMP. The other activity is designated 'posttransfer' editing and involves deacylation of mischarged Val-tRNA(Ile). This chain is Isoleucine--tRNA ligase, found in Natronomonas pharaonis (strain ATCC 35678 / DSM 2160 / CIP 103997 / JCM 8858 / NBRC 14720 / NCIMB 2260 / Gabara) (Halobacterium pharaonis).